The sequence spans 108 residues: Phosphoribosyl-ATP pyrophosphatase (108 aa).

Belongs to the PRA-PH family.

It is found in the cytoplasm. The catalysed reaction is 1-(5-phospho-beta-D-ribosyl)-ATP + H2O = 1-(5-phospho-beta-D-ribosyl)-5'-AMP + diphosphate + H(+). Its pathway is amino-acid biosynthesis; L-histidine biosynthesis; L-histidine from 5-phospho-alpha-D-ribose 1-diphosphate: step 2/9. In Dechloromonas aromatica (strain RCB), this protein is Phosphoribosyl-ATP pyrophosphatase.